Consider the following 410-residue polypeptide: Multifunctional CCA protein (410 aa).

ATP-binding residues include Gly-8 and Arg-11. Residues Gly-8 and Arg-11 each contribute to the CTP site. Mg(2+) contacts are provided by Asp-21 and Asp-23. ATP-binding residues include Arg-91, Arg-137, and Arg-140. The CTP site is built by Arg-91, Arg-137, and Arg-140. The HD domain occupies 228 to 329 (TGVHVLSVLQ…LELLQSFDVY (102 aa)).

This sequence belongs to the tRNA nucleotidyltransferase/poly(A) polymerase family. Bacterial CCA-adding enzyme type 1 subfamily. Monomer. Can also form homodimers and oligomers. Requires Mg(2+) as cofactor. Ni(2+) serves as cofactor.

The enzyme catalyses a tRNA precursor + 2 CTP + ATP = a tRNA with a 3' CCA end + 3 diphosphate. It carries out the reaction a tRNA with a 3' CCA end + 2 CTP + ATP = a tRNA with a 3' CCACCA end + 3 diphosphate. Catalyzes the addition and repair of the essential 3'-terminal CCA sequence in tRNAs without using a nucleic acid template. Adds these three nucleotides in the order of C, C, and A to the tRNA nucleotide-73, using CTP and ATP as substrates and producing inorganic pyrophosphate. tRNA 3'-terminal CCA addition is required both for tRNA processing and repair. Also involved in tRNA surveillance by mediating tandem CCA addition to generate a CCACCA at the 3' terminus of unstable tRNAs. While stable tRNAs receive only 3'-terminal CCA, unstable tRNAs are marked with CCACCA and rapidly degraded. The protein is Multifunctional CCA protein of Pseudomonas aeruginosa (strain ATCC 15692 / DSM 22644 / CIP 104116 / JCM 14847 / LMG 12228 / 1C / PRS 101 / PAO1).